The following is a 634-amino-acid chain: Chaperone protein HtpG (634 aa).

The interval 1–342 (MTVETDKQTL…SSDLSLNVSR (342 aa)) is a; substrate-binding. The segment at 343–559 (EILQSGPVVD…QGDLGLQMRQ (217 aa)) is b. The tract at residues 560–634 (LLEASGQAVP…LNKLLLELSV (75 aa)) is c.

The protein belongs to the heat shock protein 90 family. Homodimer.

Its subcellular location is the cytoplasm. Molecular chaperone. Has ATPase activity. The sequence is that of Chaperone protein HtpG from Xanthomonas euvesicatoria pv. vesicatoria (strain 85-10) (Xanthomonas campestris pv. vesicatoria).